Reading from the N-terminus, the 161-residue chain is Pathogenesis-related protein 1 (161 aa).

Positions 1 to 26 (MNFTGYSRFLIVFVALVGALVLPSKA) are cleaved as a signal peptide. Residues 34-149 (LRVHNQARGA…NGGTIISCNY (116 aa)) form the SCP domain. Disulfide bonds link C70–C138, C113–C117, and C133–C147.

Belongs to the CRISP family.

The protein resides in the secreted. It localises to the extracellular space. The protein localises to the apoplast. Its function is as follows. Partially responsible for acquired pathogen resistance. The chain is Pathogenesis-related protein 1 from Arabidopsis thaliana (Mouse-ear cress).